The sequence spans 621 residues: 1-deoxy-D-xylulose-5-phosphate synthase (621 aa).

Residues H80 and 121–123 (GHS) contribute to the thiamine diphosphate site. Position 152 (D152) interacts with Mg(2+). Thiamine diphosphate contacts are provided by residues 153-154 (GA), N181, Y288, and E370. N181 serves as a coordination point for Mg(2+).

It belongs to the transketolase family. DXPS subfamily. As to quaternary structure, homodimer. Requires Mg(2+) as cofactor. The cofactor is thiamine diphosphate.

The enzyme catalyses D-glyceraldehyde 3-phosphate + pyruvate + H(+) = 1-deoxy-D-xylulose 5-phosphate + CO2. It participates in metabolic intermediate biosynthesis; 1-deoxy-D-xylulose 5-phosphate biosynthesis; 1-deoxy-D-xylulose 5-phosphate from D-glyceraldehyde 3-phosphate and pyruvate: step 1/1. Catalyzes the acyloin condensation reaction between C atoms 2 and 3 of pyruvate and glyceraldehyde 3-phosphate to yield 1-deoxy-D-xylulose-5-phosphate (DXP). This Vibrio parahaemolyticus serotype O3:K6 (strain RIMD 2210633) protein is 1-deoxy-D-xylulose-5-phosphate synthase.